Reading from the N-terminus, the 513-residue chain is MTDTSASPPSAPSAPSAPSAAAAQAVVPAPKLTLHWGLFAAVAALLVVLAIPQPEGLTVAGQRMLAILAFAIVVWITEAVSYETSAIMITSLMAGLIGFAPTVNDPSVQYGTSKALGMALAGFSNTALALVAAALFISAAMTVTGLDRRIALVTLSAIGTSTRRILIGTIAVTIALSLVVPSATARSACVVPIMMGVIAAFGVDKKSNIAAGIMITVAQATSIWNVGIQTAAAQNLLTVGFMDKLLGERITWLQWLIAGAPWAIAMSVVLYFLVRLLLPAETDAIPGGKEAVQRELSALGPMSAPQKRLAAVSLGLLLFWATEGKLHSFDTATVTFVGLVILMMPRIGVMDWKTMQQRTPWGTLIVFGVGISLGTALLSTNAGQWLGQFVVTHSGLAAHGALLVFAILSAFLILIHLGFASATALTAALLPILIAVLQTLPGDINRVGMTMLLGFTVSFGFILPINAPQNMVCLGTETFNGRQFARIGIPVTIIGYAMMLLFAATYWRWLGWV.

Repeat copies occupy residues 9–11 (PSA), 12–14 (PSA), 15–17 (PSA), and 18–20 (PSA). The interval 9 to 20 (PSAPSAPSAPSA) is 4 X 3 AA tandem repeats of P-S-A. Helical transmembrane passes span 32–52 (LTLH…LAIP), 56–76 (GLTV…VVWI), 79–99 (AVSY…LIGF), 126–146 (TALA…VTGL), 165–185 (ILIG…SATA), 208–228 (NIAA…NVGI), 254–274 (QWLI…YFLV), 309–329 (LAAV…LHSF), 332–352 (ATVT…VMDW), 360–380 (PWGT…LLST), 400–420 (GALL…LGFA), 422–442 (ATAL…TLPG), 447–467 (VGMT…PINA), and 487–507 (IGIP…ATYW).

Belongs to the SLC13A/DASS transporter (TC 2.A.47) family. DIT1 subfamily.

Its subcellular location is the cell membrane. This is Membrane protein from Cupriavidus necator (strain ATCC 17699 / DSM 428 / KCTC 22496 / NCIMB 10442 / H16 / Stanier 337) (Ralstonia eutropha).